We begin with the raw amino-acid sequence, 262 residues long: Polyamine aminopropyltransferase (262 aa).

One can recognise a PABS domain in the interval 1 to 249 (MWITQEITPY…DIHRAAFALP (249 aa)). Asn29 provides a ligand contact to S-methyl-5'-thioadenosine. Asp83 lines the spermidine pocket. The Proton acceptor role is filled by Asp155.

The protein belongs to the spermidine/spermine synthase family. As to quaternary structure, homodimer or homotetramer.

It is found in the cytoplasm. The catalysed reaction is S-adenosyl 3-(methylsulfanyl)propylamine + putrescine = S-methyl-5'-thioadenosine + spermidine + H(+). It functions in the pathway amine and polyamine biosynthesis; spermidine biosynthesis; spermidine from putrescine: step 1/1. Catalyzes the irreversible transfer of a propylamine group from the amino donor S-adenosylmethioninamine (decarboxy-AdoMet) to putrescine (1,4-diaminobutane) to yield spermidine. This chain is Polyamine aminopropyltransferase, found in Helicobacter pylori (strain P12).